A 414-amino-acid polypeptide reads, in one-letter code: Serine hydroxymethyltransferase (414 aa).

Residues Leu-116 and 120-122 contribute to the (6S)-5,6,7,8-tetrahydrofolate site; that span reads GHL. Residue Lys-224 is modified to N6-(pyridoxal phosphate)lysine. Residues Glu-240 and 348–350 contribute to the (6S)-5,6,7,8-tetrahydrofolate site; that span reads SPF.

The protein belongs to the SHMT family. As to quaternary structure, homodimer. Requires pyridoxal 5'-phosphate as cofactor.

The protein resides in the cytoplasm. It catalyses the reaction (6R)-5,10-methylene-5,6,7,8-tetrahydrofolate + glycine + H2O = (6S)-5,6,7,8-tetrahydrofolate + L-serine. It participates in one-carbon metabolism; tetrahydrofolate interconversion. The protein operates within amino-acid biosynthesis; glycine biosynthesis; glycine from L-serine: step 1/1. In terms of biological role, catalyzes the reversible interconversion of serine and glycine with tetrahydrofolate (THF) serving as the one-carbon carrier. This reaction serves as the major source of one-carbon groups required for the biosynthesis of purines, thymidylate, methionine, and other important biomolecules. Also exhibits THF-independent aldolase activity toward beta-hydroxyamino acids, producing glycine and aldehydes, via a retro-aldol mechanism. The protein is Serine hydroxymethyltransferase of Campylobacter jejuni subsp. jejuni serotype O:2 (strain ATCC 700819 / NCTC 11168).